Here is a 190-residue protein sequence, read N- to C-terminus: Apolipoprotein M (190 aa).

The not cleaved signal peptide spans Met-1–Gln-22. Disulfide bonds link Cys-23–Cys-169, Cys-95–Cys-185, and Cys-130–Cys-159. 2 residues coordinate tetradecanoate: Glu-138 and Arg-145.

The protein belongs to the calycin superfamily. Lipocalin family. Highly divergent. Interacts with LRP2; LRP2 mediates APOM renal uptake and subsequent lysosomal degradation. In terms of tissue distribution, expressed by the liver; secreted in plasma.

It localises to the secreted. Its function is as follows. Probably involved in lipid transport. Can bind sphingosine-1-phosphate, myristic acid, palmitic acid and stearic acid, retinol, all-trans-retinoic acid and 9-cis-retinoic acid. The chain is Apolipoprotein M (Apom) from Mus musculus (Mouse).